Reading from the N-terminus, the 166-residue chain is T-cell surface glycoprotein CD3 zeta chain (166 aa).

A signal peptide spans 1–21 (MKWTALVIVAVLQTQFPVTAA). Residues 22 to 30 (QSFGLLDPK) lie on the Extracellular side of the membrane. Residues 31–51 (LCYLLDGILFIYGVIVTALFL) form a helical membrane-spanning segment. Residues 52-166 (RAKFSRSADA…ALHMQALPPR (115 aa)) are Cytoplasmic-facing. A Phosphoserine modification is found at Ser58. ITAM domains are found at residues 61-89 (APAY…LDRR), 100-128 (PQRK…EIGM), and 133-161 (QRRR…LHMQ). Tyr64, Tyr72, Tyr83, Tyr111, Tyr123, Tyr144, and Tyr155 each carry phosphotyrosine. The disordered stretch occupies residues 126 to 156 (IGMKSDNQRRRGKGHDGVYQGLSTATKDTYD).

It belongs to the CD3Z/FCER1G family. In terms of assembly, the TCR-CD3 complex is composed of a CD3D/CD3E and a CD3G/CD3E heterodimers that preferentially associate with TCRalpha and TCRbeta, respectively, to form TCRalpha/CD3E/CD3G and TCRbeta/CD3G/CD3E trimers. In turn, the hexamer interacts with CD3Z homodimer to form the TCR-CD3 complex. Alternatively, TCRalpha and TCRbeta can be replaced by TCRgamma and TCRdelta. Interacts with SLA. Interacts with TRAT1. Interacts with DOCK2. Interacts with SLA2. Interacts with SHB. Interacts with ZAP70. Interacts (tyrosine phosphorylated) with SHC1 (via SH2 domain). Interacts with PTPRC. Interacts with CRK; this interaction regulates CD3Z phosphorylation. Interacts (on T cell side) with CD81, ICAM1 and CD9 at immunological synapses between antigen-presenting cells and T cells. Interacts with CD160. Interacts with LY6E. Interacts with LY6E. The signaling subunit of immunoglobulin gamma (IgG) Fc receptor complex. As a homodimer or a heterodimer with FCER1G, associates with the ligand binding subunit FCGR3A (via transmembrane domain); this interaction is a prerequisite for Fc receptor complex expression on the cell surface. Interacts with CD5. Phosphorylated on Tyr residues after T-cell receptor triggering by LCK in association with CD4/CD8.

Its subcellular location is the cell membrane. Its function is as follows. Part of the TCR-CD3 complex present on T-lymphocyte cell surface that plays an essential role in adaptive immune response. When antigen presenting cells (APCs) activate T-cell receptor (TCR), TCR-mediated signals are transmitted across the cell membrane by the CD3 chains CD3D, CD3E, CD3G and CD3Z. All CD3 chains contain immunoreceptor tyrosine-based activation motifs (ITAMs) in their cytoplasmic domain. Upon TCR engagement, these motifs become phosphorylated by Src family protein tyrosine kinases LCK and FYN, resulting in the activation of downstream signaling pathways. CD3Z ITAMs phosphorylation creates multiple docking sites for the protein kinase ZAP70 leading to ZAP70 phosphorylation and its conversion into a catalytically active enzyme. Plays an important role in intrathymic T-cell differentiation. Additionally, participates in the activity-dependent synapse formation of retinal ganglion cells (RGCs) in both the retina and dorsal lateral geniculate nucleus (dLGN). This is T-cell surface glycoprotein CD3 zeta chain (CD247) from Ovis aries (Sheep).